The sequence spans 201 residues: Pyridoxine/pyridoxamine 5'-phosphate oxidase (201 aa).

FMN-binding positions include 49–54 (RMVLLK), 64–65 (YT), Lys71, and Gln93. Position 54 (Lys54) interacts with substrate. Tyr111, Arg115, and Ser119 together coordinate substrate. Residues 128 to 129 (QS) and Trp172 each bind FMN. 178-180 (RLH) is a binding site for substrate. Residue Arg182 coordinates FMN.

This sequence belongs to the pyridoxamine 5'-phosphate oxidase family. Homodimer. FMN is required as a cofactor.

It catalyses the reaction pyridoxamine 5'-phosphate + O2 + H2O = pyridoxal 5'-phosphate + H2O2 + NH4(+). It carries out the reaction pyridoxine 5'-phosphate + O2 = pyridoxal 5'-phosphate + H2O2. The protein operates within cofactor metabolism; pyridoxal 5'-phosphate salvage; pyridoxal 5'-phosphate from pyridoxamine 5'-phosphate: step 1/1. It participates in cofactor metabolism; pyridoxal 5'-phosphate salvage; pyridoxal 5'-phosphate from pyridoxine 5'-phosphate: step 1/1. Functionally, catalyzes the oxidation of either pyridoxine 5'-phosphate (PNP) or pyridoxamine 5'-phosphate (PMP) into pyridoxal 5'-phosphate (PLP). In Ruegeria sp. (strain TM1040) (Silicibacter sp.), this protein is Pyridoxine/pyridoxamine 5'-phosphate oxidase.